The following is a 141-amino-acid chain: Zinc finger protein 593 homolog (141 aa).

Residues 1–32 (MGRYSGHGGTHTKKKQYKRARSTKNRAKDIDQ) are disordered. A compositionally biased stretch (basic residues) spans 10–25 (THTKKKQYKRARSTKN). The segment at 60–84 (NYCIHCSKHFVTNEDLQSHIKGKPH) adopts a C2H2-type zinc-finger fold.

Belongs to the ZNF593/BUD20 C2H2-type zinc-finger protein family. Associates with pre-60S ribosomal particles; released from the pre-60S particle very early in the cytoplasm.

Its subcellular location is the nucleus. The protein localises to the cytoplasm. Involved in pre-60S ribosomal particles maturation by promoting the nuclear export of the 60S ribosome. This chain is Zinc finger protein 593 homolog, found in Dictyostelium discoideum (Social amoeba).